We begin with the raw amino-acid sequence, 290 residues long: Fructose-1,6-bisphosphatase class 1 (290 aa).

Positions 78, 96, 98, and 99 each coordinate Mg(2+). Substrate is bound by residues 99 to 102, Y201, and K226; that span reads DGSS. E232 serves as a coordination point for Mg(2+).

The protein belongs to the FBPase class 1 family. As to quaternary structure, homotetramer. The cofactor is Mg(2+).

It localises to the cytoplasm. The catalysed reaction is beta-D-fructose 1,6-bisphosphate + H2O = beta-D-fructose 6-phosphate + phosphate. It functions in the pathway carbohydrate biosynthesis; gluconeogenesis. The sequence is that of Fructose-1,6-bisphosphatase class 1 from Helicobacter pylori (strain Shi470).